We begin with the raw amino-acid sequence, 260 residues long: Cytosolic Fe-S cluster assembly factor Nubp2 homolog (260 aa).

ATP is bound at residue 14-21 (GKGGVGKS). [4Fe-4S] cluster is bound by residues cysteine 188 and cysteine 191.

It belongs to the Mrp/NBP35 ATP-binding proteins family. NUBP2/CFD1 subfamily. In terms of assembly, heterotetramer of 2 Nubp1 and 2 Nubp2 chains. Requires [4Fe-4S] cluster as cofactor.

It localises to the cytoplasm. Component of the cytosolic iron-sulfur (Fe/S) protein assembly (CIA) machinery. Required for maturation of extramitochondrial Fe-S proteins. The Nubp1-Nubp2 heterotetramer forms a Fe-S scaffold complex, mediating the de novo assembly of an Fe-S cluster and its transfer to target apoproteins. The polypeptide is Cytosolic Fe-S cluster assembly factor Nubp2 homolog (Drosophila erecta (Fruit fly)).